Reading from the N-terminus, the 332-residue chain is NADH-quinone oxidoreductase subunit H (332 aa).

Helical transmembrane passes span 16 to 36 (VFFG…TYAI), 87 to 107 (YVLA…ALPF), 116 to 136 (IGVG…GVVT), 164 to 184 (LVMS…VDIV), 190 to 210 (VWFI…AVAE), 231 to 251 (VEYS…YLFA), 253 to 273 (AALI…LGWI), 277 to 297 (VWFA…RATF), and 312 to 332 (VLLP…SLFF).

This sequence belongs to the complex I subunit 1 family. As to quaternary structure, NDH-1 is composed of 14 different subunits. Subunits NuoA, H, J, K, L, M, N constitute the membrane sector of the complex.

It localises to the cell membrane. It catalyses the reaction a quinone + NADH + 5 H(+)(in) = a quinol + NAD(+) + 4 H(+)(out). NDH-1 shuttles electrons from NADH, via FMN and iron-sulfur (Fe-S) centers, to quinones in the respiratory chain. The immediate electron acceptor for the enzyme in this species is believed to be ubiquinone. Couples the redox reaction to proton translocation (for every two electrons transferred, four hydrogen ions are translocated across the cytoplasmic membrane), and thus conserves the redox energy in a proton gradient. This subunit may bind ubiquinone. This chain is NADH-quinone oxidoreductase subunit H, found in Geobacillus thermodenitrificans (strain NG80-2).